We begin with the raw amino-acid sequence, 105 residues long: Large ribosomal subunit protein uL24 (105 aa).

This sequence belongs to the universal ribosomal protein uL24 family. Part of the 50S ribosomal subunit.

One of two assembly initiator proteins, it binds directly to the 5'-end of the 23S rRNA, where it nucleates assembly of the 50S subunit. Its function is as follows. One of the proteins that surrounds the polypeptide exit tunnel on the outside of the subunit. This is Large ribosomal subunit protein uL24 from Methylocella silvestris (strain DSM 15510 / CIP 108128 / LMG 27833 / NCIMB 13906 / BL2).